We begin with the raw amino-acid sequence, 887 residues long: Probable dual specificity protein kinase madd-3 (887 aa).

5 disordered regions span residues Pro-77–Ala-147, Ala-163–Leu-299, Leu-313–Gly-333, Thr-347–Ala-475, and Arg-504–Asp-533. Residues Pro-108 to Pro-118 are compositionally biased toward low complexity. Residues Val-121 to Ser-130 show a composition bias toward basic and acidic residues. Residues Ser-177 to Gly-192 show a composition bias toward polar residues. Low complexity predominate over residues Ser-217 to Ala-241. 2 stretches are compositionally biased toward polar residues: residues Pro-314 to Gly-332 and Asn-356 to Gly-366. Residues Asp-367–Leu-377 are compositionally biased toward basic and acidic residues. The span at Leu-407 to Asn-419 shows a compositional bias: low complexity. The segment covering Phe-439–Glu-462 has biased composition (polar residues). In terms of domain architecture, Protein kinase spans Phe-551 to Phe-863. ATP contacts are provided by residues Leu-557–Val-565 and Lys-580. Asp-677 acts as the Proton acceptor in catalysis.

The protein belongs to the protein kinase superfamily. CMGC Ser/Thr protein kinase family. Lammer subfamily. Expressed in body wall, vulval and anal depressor muscles.

The protein resides in the cytoplasm. Its subcellular location is the nucleus. Its function is as follows. Probable dual specificity kinase acting on both serine/threonine and tyrosine-containing substrates. Negatively regulates p38 MAPK signaling to allow for the plasma membrane of body wall muscle cells to form projections, also called muscle arms, that extend and connect the body wall muscles to target motor neurons. Negative regulation of p38 MAPK signaling may in turn modulate the trafficking of the muscle specific receptor eva-1 to the lysosome, to ensure proper display of the eva-1 receptor on the plasma membrane of muscle cells and allow for muscle arm extension towards guidance cues. The polypeptide is Probable dual specificity protein kinase madd-3 (Caenorhabditis elegans).